The following is a 303-amino-acid chain: UDP-3-O-acyl-N-acetylglucosamine deacetylase (303 aa).

Residues H78, H237, and D241 each coordinate Zn(2+). The active-site Proton donor is H264.

The protein belongs to the LpxC family. Zn(2+) serves as cofactor.

The catalysed reaction is a UDP-3-O-[(3R)-3-hydroxyacyl]-N-acetyl-alpha-D-glucosamine + H2O = a UDP-3-O-[(3R)-3-hydroxyacyl]-alpha-D-glucosamine + acetate. It functions in the pathway glycolipid biosynthesis; lipid IV(A) biosynthesis; lipid IV(A) from (3R)-3-hydroxytetradecanoyl-[acyl-carrier-protein] and UDP-N-acetyl-alpha-D-glucosamine: step 2/6. Catalyzes the hydrolysis of UDP-3-O-myristoyl-N-acetylglucosamine to form UDP-3-O-myristoylglucosamine and acetate, the committed step in lipid A biosynthesis. This chain is UDP-3-O-acyl-N-acetylglucosamine deacetylase, found in Xanthomonas campestris pv. campestris (strain B100).